The chain runs to 558 residues: Asparagine--tRNA ligase, cytoplasmic (558 aa).

Phosphoserine is present on S71. Residues 79 to 101 (MWHREQMKSESREKKEAEDSLRR) are disordered. Basic and acidic residues predominate over residues 81 to 101 (HREQMKSESREKKEAEDSLRR). Residues K254 and K500 each carry the N6-acetyllysine modification.

Belongs to the class-II aminoacyl-tRNA synthetase family. As to quaternary structure, homodimer.

It localises to the cytoplasm. The catalysed reaction is tRNA(Asn) + L-asparagine + ATP = L-asparaginyl-tRNA(Asn) + AMP + diphosphate + H(+). In terms of biological role, catalyzes the attachment of asparagine to tRNA(Asn) in a two-step reaction: asparagine is first activated by ATP to form Asn-AMP and then transferred to the acceptor end of tRNA(Asn). In addition to its essential role in protein synthesis, acts as a signaling molecule that induced migration of CCR3-expressing cells. Has an essential role in the development of the cerebral cortex, being required for proper proliferation of radial glial cells. The protein is Asparagine--tRNA ligase, cytoplasmic of Macaca fascicularis (Crab-eating macaque).